Reading from the N-terminus, the 103-residue chain is uncharacterized protein (103 aa).

The EthD domain maps to 12–88; that stretch reads ADPAAFDEHY…AAADVANFAS (77 aa).

This is an uncharacterized protein from Rhodococcus erythropolis (Arthrobacter picolinophilus).